A 181-amino-acid chain; its full sequence is ATP synthase subunit delta (181 aa).

Belongs to the ATPase delta chain family. In terms of assembly, F-type ATPases have 2 components, F(1) - the catalytic core - and F(0) - the membrane proton channel. F(1) has five subunits: alpha(3), beta(3), gamma(1), delta(1), epsilon(1). F(0) has three main subunits: a(1), b(2) and c(10-14). The alpha and beta chains form an alternating ring which encloses part of the gamma chain. F(1) is attached to F(0) by a central stalk formed by the gamma and epsilon chains, while a peripheral stalk is formed by the delta and b chains.

The protein localises to the cell inner membrane. Its function is as follows. F(1)F(0) ATP synthase produces ATP from ADP in the presence of a proton or sodium gradient. F-type ATPases consist of two structural domains, F(1) containing the extramembraneous catalytic core and F(0) containing the membrane proton channel, linked together by a central stalk and a peripheral stalk. During catalysis, ATP synthesis in the catalytic domain of F(1) is coupled via a rotary mechanism of the central stalk subunits to proton translocation. This protein is part of the stalk that links CF(0) to CF(1). It either transmits conformational changes from CF(0) to CF(1) or is implicated in proton conduction. The sequence is that of ATP synthase subunit delta from Aquifex aeolicus (strain VF5).